A 367-amino-acid polypeptide reads, in one-letter code: Forkhead box protein I2-B (367 aa).

The segment covering 31 to 40 has biased composition (low complexity); sequence QQQNQQLPQR. Positions 31–51 are disordered; sequence QQQNQQLPQRPAAPPAPGYGL. Residues 124–218 constitute a DNA-binding region (fork-head); that stretch reads RPPYSYSSLI…DNGNFRRKRK (95 aa). A disordered region spans residues 224–254; the sequence is VGAGFDEESNEDKKPLALKSLGPDSPGGASV.

It is found in the nucleus. Possible transcriptional activator. The chain is Forkhead box protein I2-B (foxi2-b) from Xenopus laevis (African clawed frog).